The following is a 395-amino-acid chain: MCDQTFLVNVFGSCDKCFKQRALRPVFKKSQQLSYCSTCAEIMATEGLHENETLASLKSEAESLKGKLEEERAKLHDVELHQVAERVEALGQFVMKTRRTLKGHGNKVLCMDWCKDKRRIVSSSQDGKVIVWDSFTTNKEHAVTMPCTWVMACAYAPSGCAIACGGLDNKCSVYPLTFDKNENMAAKKKSVAMHTNYLSACSFTNSDMQILTASGDGTCALWDVESGQLLQSFHGHGADVLCLDLAPSETGNTFVSGGCDKKAMVWDMRSGQCVQAFETHESDINSVRYYPSGDAFASGSDDATCRLYDLRADREVAIYSKESIIFGASSVDFSLSGRLLFAGYNDYTINVWDVLKGSRVSILFGHENRVSTLRVSPDGTAFCSGSWDHTLRVWA.

WD repeat units lie at residues 103 to 142, 145 to 184, 193 to 234, 236 to 278, 279 to 318, 320 to 362, and 365 to 394; these read GHGNKVLCMDWCKDKRRIVSSSQDGKVIVWDSFTTNKEHA, MPCTWVMACAYAPSGCAIACGGLDNKCSVYPLTFDKNENM, MHTN…QSFH, HGAD…QAFE, THESDINSVRYYPSGDAFASGSDDATCRLYDLRADREVAI, SKES…RVSI, and GHENRVSTLRVSPDGTAFCSGSWDHTLRVW.

Belongs to the WD repeat G protein beta family. Component of a complex composed of RGS9 (isoform RGS9-1), GNB5 and RGS9BP; within this complex, the presence of GNB5 stabilizes both itself and RGS9 and increases RGS9 GTPase-activating protein (GAP) activity. Interacts with RGS7, forming the RGS7-GNB5 complex; within this complex, the presence of GNB5 increases RGS7 GTPase-activating protein (GAP) activity. Interacts with GPR158; promotes the GTPase activator activity of the RGS7-GNB5 complex in absence of glycine, in contrast GTPase activator activity of the RGS7-GNB5 complex is inhibited in presence of glycine. Interacts with RGS6. Widely expressed.

The protein resides in the membrane. Functionally, enhances GTPase-activating protein (GAP) activity of regulator of G protein signaling (RGS) proteins, such as RGS7 and RGS9, hence involved in the termination of the signaling initiated by the G protein coupled receptors (GPCRs) by accelerating the GTP hydrolysis on the G-alpha subunits, thereby promoting their inactivation. Increases RGS7 GTPase-activating protein (GAP) activity, thereby regulating mood and cognition. Increases RGS9 GTPase-activating protein (GAP) activity, hence contributes to the deactivation of G protein signaling initiated by D(2) dopamine receptors. May play an important role in neuronal signaling, including in the parasympathetic, but not sympathetic, control of heart rate. The protein is Guanine nucleotide-binding protein subunit beta-5 (GNB5) of Homo sapiens (Human).